A 262-amino-acid chain; its full sequence is uncharacterized protein (262 aa).

Disordered regions lie at residues 1 to 30 and 232 to 262; these read MGKK…KKEK and EEEE…DMEE. 3 stretches are compositionally biased toward acidic residues: residues 9-21, 232-245, and 253-262; these read NEDG…ETES, EEEE…EETD, and EEDEDEDMEE.

This is an uncharacterized protein from Caenorhabditis elegans.